The primary structure comprises 239 residues: Increased recombination centers protein 22-2 (239 aa).

Positions 1–19 (MKLSTIFTAFAATIATVAG) are cleaved as a signal peptide. Residues 20–161 (YETTGSKQTV…AAVSFFDPRL (142 aa)) are Lumenal-facing. Residues 162–182 (IFLELVLLITFAGLIYVGYEI) traverse the membrane as a helical segment. At 183–239 (WGKQYFKGVAPVKAKKVSAAKASSPVASGPSTTSATGYDTNWIPESHLKQKKTKKVN) the chain is on the cytoplasmic side. Residues 201–213 (AAKASSPVASGPS) are compositionally biased toward low complexity. The segment at 201–222 (AAKASSPVASGPSTTSATGYDT) is disordered.

It belongs to the IRC22 family.

Its subcellular location is the endoplasmic reticulum membrane. Functionally, is probably involved in a pathway contributing to genomic integrity. This Candida albicans (strain WO-1) (Yeast) protein is Increased recombination centers protein 22-2 (IRC22-2).